Here is a 222-residue protein sequence, read N- to C-terminus: Large ribosomal subunit protein uL4 (222 aa).

The interval 67-87 (QKGTGNARAGSKRTNVRRGGG) is disordered.

This sequence belongs to the universal ribosomal protein uL4 family. As to quaternary structure, part of the 50S ribosomal subunit.

Its function is as follows. One of the primary rRNA binding proteins, this protein initially binds near the 5'-end of the 23S rRNA. It is important during the early stages of 50S assembly. It makes multiple contacts with different domains of the 23S rRNA in the assembled 50S subunit and ribosome. Forms part of the polypeptide exit tunnel. This is Large ribosomal subunit protein uL4 from Rhodopirellula baltica (strain DSM 10527 / NCIMB 13988 / SH1).